The sequence spans 346 residues: T-box protein 12 (346 aa).

Acidic residues predominate over residues 33–48 (DEEDVEVDVEDVDDVD). The interval 33-66 (DEEDVEVDVEDVDDVDLSSIPSKSPERSRGRPKI) is disordered. Positions 86 to 268 (LWAKFFDLGT…KNPFAKGFRD (183 aa)) form a DNA-binding region, T-box.

The protein resides in the nucleus. In terms of biological role, transcription factor. Involved in cell fate determination; required to pattern the posterior hindgut. Involved in motor neuron fate determination and maintenance, acting as a transcriptional repressor to counteract gene activation by transcription factor unc-3 in a subset of motor neurons. Required throughout development to repress transcription by unc-3, probably acting by binding to specific promoter elements. Represses expression of VA and VB motor neuron-specific effector genes, such as DEG/ENaC channel del-1 and the innexin inx-12, in DA and DB motor neurons. Represses expression of transcription factor bnc-1, perhaps acting directly, in DA and DB motor neurons. This chain is T-box protein 12 (mab-9), found in Caenorhabditis elegans.